Here is a 476-residue protein sequence, read N- to C-terminus: MHDIKAIRDNPQAFDAAFTRRGLAPIADSLIKLDETRRAAILESEKAQARRNAASKEIGDAKKAKDNARADALMAEVAELKTTMPALEAAVKEADEALKKALSEIPNLPLDEVPEGADEHGNVDHHRFGAKRDYAFTPKAHYDLGEALGMMDFEAAAKISGARFVVLKKGLARLERAIGQFFLDVHTGEHGYTEVNPPLLVRDDAMFGTAQLPKFREDQFQTVTEEVRRRTIVEFVSSAMKLGASATDAGGSEFARQLANEELVDFSYAKMPERFWLIPTAEVSLTNLVRESILDEKELPMRLTALTPCFRAEAGAAGRDTRGMIRQHQFTKVELVSITTPEQSKDEHERMLSCAEEVLRRLGLHYRVMTLCTGDMGFASQKTYDIEVWMPGQGEGGAYREISSCSVCGDFQARRMDARSRGPDGKPRFVHTLNGSGTAVGRALIAVIENYQQEDGSIAVPDALQPYMGGLKVIAK.

280–282 (TAE) contacts L-serine. 311–313 (RAE) is an ATP binding site. E334 contacts L-serine. Residue 401–404 (EISS) participates in ATP binding. S436 contacts L-serine.

Belongs to the class-II aminoacyl-tRNA synthetase family. Type-1 seryl-tRNA synthetase subfamily. As to quaternary structure, homodimer. The tRNA molecule binds across the dimer.

It is found in the cytoplasm. It carries out the reaction tRNA(Ser) + L-serine + ATP = L-seryl-tRNA(Ser) + AMP + diphosphate + H(+). The catalysed reaction is tRNA(Sec) + L-serine + ATP = L-seryl-tRNA(Sec) + AMP + diphosphate + H(+). It participates in aminoacyl-tRNA biosynthesis; selenocysteinyl-tRNA(Sec) biosynthesis; L-seryl-tRNA(Sec) from L-serine and tRNA(Sec): step 1/1. Its function is as follows. Catalyzes the attachment of serine to tRNA(Ser). Is also able to aminoacylate tRNA(Sec) with serine, to form the misacylated tRNA L-seryl-tRNA(Sec), which will be further converted into selenocysteinyl-tRNA(Sec). The sequence is that of Serine--tRNA ligase from Rhodopseudomonas palustris (strain HaA2).